The following is a 192-amino-acid chain: Ion-translocating oxidoreductase complex subunit A (192 aa).

6 helical membrane-spanning segments follow: residues 5-25, 39-59, 63-83, 102-122, 134-154, and 171-191; these read ILLIIGTALINNFVLVKFLGL, VGMGLATMFVLTVASLCAYLV, ILIPLNATFLRTLVFILVIAV, LLGIFLPLITTNCAVLGVALL, VVYGFGASLGFSLVLVLFAAL, and AIALITAGLMSLAFMGFTGLV.

Belongs to the NqrDE/RnfAE family. In terms of assembly, the complex is composed of six subunits: RnfA, RnfB, RnfC, RnfD, RnfE and RnfG.

The protein resides in the cell inner membrane. In terms of biological role, part of a membrane-bound complex that couples electron transfer with translocation of ions across the membrane. In Haemophilus influenzae (strain 86-028NP), this protein is Ion-translocating oxidoreductase complex subunit A.